A 35-amino-acid chain; its full sequence is Thionin NsW1 (35 aa).

3 cysteine pairs are disulfide-bonded: C4-C32, C12-C30, and C16-C26.

Post-translationally, contains 4 disulfide bonds.

The protein resides in the secreted. Its function is as follows. Antimicrobial peptide disrupting membranes. Has antibacterial against Gram-positive bacteria S.aureus (MIC=6.5 uM) and B.subtilis (MIC=3.25 uM) but not against Gram-negative bacterium E.coli. Has antifungal activity against C.albicans (MIC=1.63 uM). The chain is Thionin NsW1 from Nigella sativa (Black cumin).